The sequence spans 238 residues: Ribitol-5-phosphate cytidylyltransferase (238 aa).

Residues 7–10 (LAGG) and 81–87 (GDDRNHS) each bind CTP.

The protein belongs to the IspD/TarI cytidylyltransferase family. TarI subfamily.

It carries out the reaction D-ribitol 5-phosphate + CTP + H(+) = CDP-L-ribitol + diphosphate. It functions in the pathway cell wall biogenesis; poly(ribitol phosphate) teichoic acid biosynthesis. Its function is as follows. Catalyzes the transfer of the cytidylyl group of CTP to D-ribitol 5-phosphate. The polypeptide is Ribitol-5-phosphate cytidylyltransferase (Staphylococcus epidermidis (strain ATCC 12228 / FDA PCI 1200)).